A 139-amino-acid chain; its full sequence is D-ribose pyranase (139 aa).

Residue His20 is the Proton donor of the active site. Residues Asp28, His106, and 128–130 contribute to the substrate site; that span reads YAN.

The protein belongs to the RbsD / FucU family. RbsD subfamily. In terms of assembly, homodecamer.

The protein localises to the cytoplasm. The catalysed reaction is beta-D-ribopyranose = beta-D-ribofuranose. Its pathway is carbohydrate metabolism; D-ribose degradation; D-ribose 5-phosphate from beta-D-ribopyranose: step 1/2. Its function is as follows. Catalyzes the interconversion of beta-pyran and beta-furan forms of D-ribose. The sequence is that of D-ribose pyranase from Escherichia coli O127:H6 (strain E2348/69 / EPEC).